Reading from the N-terminus, the 407-residue chain is MAGRVFEAWKGSNKFLFGGRLIFGPDAWSIPFTFLLIITPVCFFSVFVATHLRRELLPNNAGHVFLVAGVLFTVFVLILLFLTSARDPGIVPRNSHPPEEELCYDTTVSSDGRQTPTVQIPRTKEVMVYGVSVRVKYCDTCMLYRPPRCSHCSICNNCVERFDHHCPWRNYRYFFMFVSSATILCIYIFSMSALYIKVLMDNHQGTVWRAMRESPWAVMLMIYCFISLWFVGGLTGFHLYLISTNQTTYENFRYRSDNRINVYNRGCSNNFFETFCSKVKPSRNDFRAFIKEEPPRNITLATTWERPEEADEENREERRQKVEDDLDIDEDVMKLQQRLNDEEGSDTAHHKIDIDQMRIGSNERAPTIRSEARHGNWGARSNAQEEDVIAGSSVRESRSYAAAEEGR.

The next 2 membrane-spanning stretches (helical) occupy residues tryptophan 28–valine 48 and glycine 62–leucine 82. The region spanning lysine 136 to serine 179 is the DHHC domain. The active-site S-palmitoyl cysteine intermediate is the cysteine 166. The next 2 helical transmembrane spans lie at phenylalanine 174–leucine 194 and alanine 217–phenylalanine 237. A disordered region spans residues leucine 300–arginine 407. Over residues aspartate 346–glutamine 356 the composition is skewed to basic and acidic residues.

The protein belongs to the DHHC palmitoyltransferase family. Mainly expressed in seeds.

The protein localises to the cell membrane. The enzyme catalyses L-cysteinyl-[protein] + hexadecanoyl-CoA = S-hexadecanoyl-L-cysteinyl-[protein] + CoA. Functionally, palmitoyl acyltransferase. The polypeptide is Probable protein S-acyltransferase 9 (PAT09) (Arabidopsis thaliana (Mouse-ear cress)).